The sequence spans 150 residues: UPF0756 membrane protein ACICU_02320 (150 aa).

The next 4 helical transmembrane spans lie at 1-21 (MLAQ…CGLL), 45-65 (FFPY…TIGV), 83-103 (FISF…WLGG), and 115-135 (VVAG…GVPV).

The protein belongs to the UPF0756 family.

The protein localises to the cell membrane. The protein is UPF0756 membrane protein ACICU_02320 of Acinetobacter baumannii (strain ACICU).